The chain runs to 506 residues: Apolipoprotein N-acyltransferase (506 aa).

7 helical membrane-spanning segments follow: residues 10–30 (ANAK…AGWG), 33–53 (LALP…PLWW), 57–77 (VLAP…FYGS), 105–125 (IWLC…LLMA), 139–159 (WGVT…LWWI), 176–196 (LAGP…VTLS), and 205–225 (VGLA…SVRV). A CN hydrolase domain is found at 238 to 473 (IQGNIPTREK…FVIYAATIFR (236 aa)). Glu-279 acts as the Proton acceptor in catalysis. Lys-336 is a catalytic residue. Cys-385 (nucleophile) is an active-site residue. Residues 483–500 (YGDWLLPLLLGMLSLSVL) traverse the membrane as a helical segment.

Belongs to the CN hydrolase family. Apolipoprotein N-acyltransferase subfamily.

The protein localises to the cell inner membrane. It catalyses the reaction N-terminal S-1,2-diacyl-sn-glyceryl-L-cysteinyl-[lipoprotein] + a glycerophospholipid = N-acyl-S-1,2-diacyl-sn-glyceryl-L-cysteinyl-[lipoprotein] + a 2-acyl-sn-glycero-3-phospholipid + H(+). The protein operates within protein modification; lipoprotein biosynthesis (N-acyl transfer). Its function is as follows. Catalyzes the phospholipid dependent N-acylation of the N-terminal cysteine of apolipoprotein, the last step in lipoprotein maturation. The protein is Apolipoprotein N-acyltransferase of Thermosynechococcus vestitus (strain NIES-2133 / IAM M-273 / BP-1).